A 143-amino-acid polypeptide reads, in one-letter code: Large ribosomal subunit protein uL11 (143 aa).

Belongs to the universal ribosomal protein uL11 family. Part of the ribosomal stalk of the 50S ribosomal subunit. Interacts with L10 and the large rRNA to form the base of the stalk. L10 forms an elongated spine to which L12 dimers bind in a sequential fashion forming a multimeric L10(L12)X complex. Post-translationally, one or more lysine residues are methylated.

In terms of biological role, forms part of the ribosomal stalk which helps the ribosome interact with GTP-bound translation factors. The chain is Large ribosomal subunit protein uL11 from Phenylobacterium zucineum (strain HLK1).